Consider the following 375-residue polypeptide: Dual-specificity RNA methyltransferase RlmN (375 aa).

The Proton acceptor role is filled by E94. A Radical SAM core domain is found at 100 to 339 (EDDRATLCVS…VTVRKTRGDD (240 aa)). C107 and C344 form a disulfide bridge. 3 residues coordinate [4Fe-4S] cluster: C114, C118, and C121. S-adenosyl-L-methionine-binding positions include 168–169 (GE), S200, 222–224 (SLH), and N301. Residue C344 is the S-methylcysteine intermediate of the active site.

This sequence belongs to the radical SAM superfamily. RlmN family. [4Fe-4S] cluster is required as a cofactor.

It is found in the cytoplasm. It carries out the reaction adenosine(2503) in 23S rRNA + 2 reduced [2Fe-2S]-[ferredoxin] + 2 S-adenosyl-L-methionine = 2-methyladenosine(2503) in 23S rRNA + 5'-deoxyadenosine + L-methionine + 2 oxidized [2Fe-2S]-[ferredoxin] + S-adenosyl-L-homocysteine. The catalysed reaction is adenosine(37) in tRNA + 2 reduced [2Fe-2S]-[ferredoxin] + 2 S-adenosyl-L-methionine = 2-methyladenosine(37) in tRNA + 5'-deoxyadenosine + L-methionine + 2 oxidized [2Fe-2S]-[ferredoxin] + S-adenosyl-L-homocysteine. Its function is as follows. Specifically methylates position 2 of adenine 2503 in 23S rRNA and position 2 of adenine 37 in tRNAs. m2A2503 modification seems to play a crucial role in the proofreading step occurring at the peptidyl transferase center and thus would serve to optimize ribosomal fidelity. The polypeptide is Dual-specificity RNA methyltransferase RlmN (Vibrio campbellii (strain ATCC BAA-1116)).